The chain runs to 61 residues: Potassium channel toxin alpha-KTx 5.3 (61 aa).

Positions Met-1–Gly-28 are cleaved as a signal peptide. 3 disulfide bridges follow: Cys-31–Cys-49, Cys-36–Cys-54, and Cys-40–Cys-56. The interval Lys-34–Gln-37 is [R/K]XCQ motif. The residue at position 59 (His-59) is a Histidine amide.

It belongs to the short scorpion toxin superfamily. Potassium channel inhibitor family. Alpha-KTx 05 subfamily. In terms of tissue distribution, expressed by the venom gland.

The protein localises to the secreted. Functionally, blocks small conductance calcium-activated potassium channels (KCNN, SK). Has also been shown to weakly inhibit Kv11.1/KCNH2/ERG1, Kv1.2/KCNA2, Kv1.3/KCNA3 and Kv2.1/KCNB1 voltage-gated potassium channels. This Olivierus martensii (Manchurian scorpion) protein is Potassium channel toxin alpha-KTx 5.3.